Here is a 187-residue protein sequence, read N- to C-terminus: Decorin-binding protein B (187 aa).

The N-terminal stretch at Met-1–Ala-20 is a signal peptide.

Belongs to the decorin-binding protein family.

In terms of biological role, binds to decorin which may mediate the adherence of B.burgdorferi to collagen fibers in skin and other tissues. The sequence is that of Decorin-binding protein B (dbpB) from Borreliella burgdorferi (strain ATCC 35210 / DSM 4680 / CIP 102532 / B31) (Borrelia burgdorferi).